A 79-amino-acid polypeptide reads, in one-letter code: Small ribosomal subunit protein bS18 (79 aa).

Belongs to the bacterial ribosomal protein bS18 family. In terms of assembly, part of the 30S ribosomal subunit. Forms a tight heterodimer with protein bS6.

Functionally, binds as a heterodimer with protein bS6 to the central domain of the 16S rRNA, where it helps stabilize the platform of the 30S subunit. The protein is Small ribosomal subunit protein bS18 of Bradyrhizobium diazoefficiens (strain JCM 10833 / BCRC 13528 / IAM 13628 / NBRC 14792 / USDA 110).